The following is a 241-amino-acid chain: ATP phosphoribosyltransferase (241 aa).

It belongs to the ATP phosphoribosyltransferase family. Short subfamily. Heteromultimer composed of HisG and HisZ subunits.

Its subcellular location is the cytoplasm. It catalyses the reaction 1-(5-phospho-beta-D-ribosyl)-ATP + diphosphate = 5-phospho-alpha-D-ribose 1-diphosphate + ATP. The protein operates within amino-acid biosynthesis; L-histidine biosynthesis; L-histidine from 5-phospho-alpha-D-ribose 1-diphosphate: step 1/9. Functionally, catalyzes the condensation of ATP and 5-phosphoribose 1-diphosphate to form N'-(5'-phosphoribosyl)-ATP (PR-ATP). Has a crucial role in the pathway because the rate of histidine biosynthesis seems to be controlled primarily by regulation of HisG enzymatic activity. The polypeptide is ATP phosphoribosyltransferase (Gluconobacter oxydans (strain 621H) (Gluconobacter suboxydans)).